The chain runs to 197 residues: UDP-N-acetylglucosamine transferase subunit ALG13 (197 aa).

This sequence belongs to the glycosyltransferase 28 family. In terms of assembly, heterodimer with ALG14 to form a functional enzyme.

Its subcellular location is the endoplasmic reticulum. The catalysed reaction is an N-acetyl-alpha-D-glucosaminyl-diphospho-di-trans,poly-cis-dolichol + UDP-N-acetyl-alpha-D-glucosamine = an N,N'-diacetylchitobiosyl-diphospho-di-trans,poly-cis-dolichol + UDP + H(+). Involved in protein N-glycosylation. Essential for the second step of the dolichol-linked oligosaccharide pathway. This is UDP-N-acetylglucosamine transferase subunit ALG13 (ALG13) from Kluyveromyces lactis (strain ATCC 8585 / CBS 2359 / DSM 70799 / NBRC 1267 / NRRL Y-1140 / WM37) (Yeast).